The sequence spans 432 residues: Mitochondrial distribution and morphology protein 12 (432 aa).

The region spanning 1–432 is the SMP-LTD domain; sequence MSIEVDWRAA…VFPSFWTFLI (432 aa). 2 disordered regions span residues 182 to 273 and 354 to 377; these read WTDP…PRMR and QQEA…PKRQ. Residues 214–234 are compositionally biased toward low complexity; the sequence is TSNPTSRPSTSSTLPSHPSAS. Composition is skewed to basic and acidic residues over residues 243–253 and 355–364; these read TGKEHGSLAED and QEARGQDDRP.

This sequence belongs to the MDM12 family. As to quaternary structure, component of the ER-mitochondria encounter structure (ERMES) or MDM complex, composed of mmm1, mdm10, mdm12 and mdm34. A mmm1 homodimer associates with one molecule of mdm12 on each side in a pairwise head-to-tail manner, and the SMP-LTD domains of mmm1 and mdm12 generate a continuous hydrophobic tunnel for phospholipid trafficking.

It localises to the mitochondrion outer membrane. It is found in the endoplasmic reticulum membrane. Functionally, component of the ERMES/MDM complex, which serves as a molecular tether to connect the endoplasmic reticulum (ER) and mitochondria. Components of this complex are involved in the control of mitochondrial shape and protein biogenesis, and function in nonvesicular lipid trafficking between the ER and mitochondria. Mdm12 is required for the interaction of the ER-resident membrane protein mmm1 and the outer mitochondrial membrane-resident beta-barrel protein mdm10. The mdm12-mmm1 subcomplex functions in the major beta-barrel assembly pathway that is responsible for biogenesis of all mitochondrial outer membrane beta-barrel proteins, and acts in a late step after the SAM complex. The mdm10-mdm12-mmm1 subcomplex further acts in the TOM40-specific pathway after the action of the mdm12-mmm1 complex. Essential for establishing and maintaining the structure of mitochondria and maintenance of mtDNA nucleoids. The chain is Mitochondrial distribution and morphology protein 12 from Aspergillus oryzae (strain ATCC 42149 / RIB 40) (Yellow koji mold).